Reading from the N-terminus, the 548-residue chain is Non-structural protein NS1 (548 aa).

Belongs to the orbivirus non-structural protein NS1 family.

In Camelus dromedarius (Dromedary), this protein is Non-structural protein NS1 (Segment-5).